The following is a 253-amino-acid chain: 5-oxoprolinase subunit A (253 aa).

Belongs to the LamB/PxpA family. As to quaternary structure, forms a complex composed of PxpA, PxpB and PxpC.

The catalysed reaction is 5-oxo-L-proline + ATP + 2 H2O = L-glutamate + ADP + phosphate + H(+). In terms of biological role, catalyzes the cleavage of 5-oxoproline to form L-glutamate coupled to the hydrolysis of ATP to ADP and inorganic phosphate. This is 5-oxoprolinase subunit A from Bacillus thuringiensis subsp. konkukian (strain 97-27).